The primary structure comprises 489 residues: NADH-quinone oxidoreductase subunit N (489 aa).

14 helical membrane passes run 15 to 35, 44 to 64, 78 to 98, 106 to 126, 131 to 151, 166 to 186, 209 to 229, 244 to 264, 278 to 298, 306 to 326, 333 to 353, 378 to 398, 412 to 432, and 459 to 479; these read APLL…VFFI, GYLA…LWGV, FALT…TMSL, IEQG…ILLA, LIVL…LTGF, LVLG…IFGA, LTLL…KVAL, PTPV…AALV, WLPV…LGAV, MLAY…MVAG, AFLF…AVLI, LAVA…MAGF, GLPW…FFYL, and IALA…VFAL.

The protein belongs to the complex I subunit 2 family. As to quaternary structure, NDH-1 is composed of 14 different subunits. Subunits NuoA, H, J, K, L, M, N constitute the membrane sector of the complex.

Its subcellular location is the cell membrane. The catalysed reaction is a quinone + NADH + 5 H(+)(in) = a quinol + NAD(+) + 4 H(+)(out). Its function is as follows. NDH-1 shuttles electrons from NADH, via FMN and iron-sulfur (Fe-S) centers, to quinones in the respiratory chain. The immediate electron acceptor for the enzyme in this species is believed to be ubiquinone. Couples the redox reaction to proton translocation (for every two electrons transferred, four hydrogen ions are translocated across the cytoplasmic membrane), and thus conserves the redox energy in a proton gradient. This chain is NADH-quinone oxidoreductase subunit N, found in Chloroflexus aggregans (strain MD-66 / DSM 9485).